A 387-amino-acid polypeptide reads, in one-letter code: 3-ketoacyl-CoA thiolase (387 aa).

Cys-91 acts as the Acyl-thioester intermediate in catalysis. Active-site proton acceptor residues include His-343 and Cys-373.

Belongs to the thiolase-like superfamily. Thiolase family. In terms of assembly, heterotetramer of two alpha chains (FadB) and two beta chains (FadA).

It is found in the cytoplasm. The catalysed reaction is an acyl-CoA + acetyl-CoA = a 3-oxoacyl-CoA + CoA. It functions in the pathway lipid metabolism; fatty acid beta-oxidation. Catalyzes the final step of fatty acid oxidation in which acetyl-CoA is released and the CoA ester of a fatty acid two carbons shorter is formed. The chain is 3-ketoacyl-CoA thiolase from Cronobacter sakazakii (strain ATCC BAA-894) (Enterobacter sakazakii).